The primary structure comprises 413 residues: uncharacterized protein (413 aa).

This is an uncharacterized protein from Mycobacterium tuberculosis (strain ATCC 25618 / H37Rv).